Consider the following 260-residue polypeptide: Small ribosomal subunit protein eS1 (260 aa).

A2 is modified (N-acetylalanine; partial).

The protein belongs to the eukaryotic ribosomal protein eS1 family. Component of the small ribosomal subunit. Mature ribosomes consist of a small (40S) and a large (60S) subunit. The 40S subunit contains about 33 different proteins and 1 molecule of RNA (18S). The 60S subunit contains about 49 different proteins and 3 molecules of RNA (25S, 5.8S and 5S).

It localises to the cytoplasm. In Mycosarcoma maydis (Corn smut fungus), this protein is Small ribosomal subunit protein eS1.